The following is a 64-amino-acid chain: uncharacterized protein (64 aa).

To P.abyssi PAB3148.

This is an uncharacterized protein from Archaeoglobus fulgidus (strain ATCC 49558 / DSM 4304 / JCM 9628 / NBRC 100126 / VC-16).